A 237-amino-acid chain; its full sequence is UDP-2,3-diacylglucosamine hydrolase (237 aa).

Residues Asp-8, His-10, Asp-41, Asn-78, and His-113 each coordinate Mn(2+). 78–79 (NR) provides a ligand contact to substrate. Asp-121, Ser-159, Gln-164, and His-195 together coordinate substrate. His-195 and His-197 together coordinate Mn(2+).

It belongs to the LpxH family. The cofactor is Mn(2+).

Its subcellular location is the cell inner membrane. The enzyme catalyses UDP-2-N,3-O-bis[(3R)-3-hydroxytetradecanoyl]-alpha-D-glucosamine + H2O = 2-N,3-O-bis[(3R)-3-hydroxytetradecanoyl]-alpha-D-glucosaminyl 1-phosphate + UMP + 2 H(+). It participates in glycolipid biosynthesis; lipid IV(A) biosynthesis; lipid IV(A) from (3R)-3-hydroxytetradecanoyl-[acyl-carrier-protein] and UDP-N-acetyl-alpha-D-glucosamine: step 4/6. Hydrolyzes the pyrophosphate bond of UDP-2,3-diacylglucosamine to yield 2,3-diacylglucosamine 1-phosphate (lipid X) and UMP by catalyzing the attack of water at the alpha-P atom. Involved in the biosynthesis of lipid A, a phosphorylated glycolipid that anchors the lipopolysaccharide to the outer membrane of the cell. This Chromobacterium violaceum (strain ATCC 12472 / DSM 30191 / JCM 1249 / CCUG 213 / NBRC 12614 / NCIMB 9131 / NCTC 9757 / MK) protein is UDP-2,3-diacylglucosamine hydrolase.